The chain runs to 20 residues: Venom peptide Ocy8 (20 aa).

Expressed by the venom gland.

Its subcellular location is the secreted. In Opisthacanthus cayaporum (South American scorpion), this protein is Venom peptide Ocy8.